A 74-amino-acid polypeptide reads, in one-letter code: Conotoxin SIIID (74 aa).

The N-terminal stretch at 1-20 (MMSKLGVLLTVCLLLFPLTA) is a signal peptide. The propeptide occupies 21–53 (LPLDGDQPADQLEDRMQDDISSEQYPSFVRRQK). 3 disulfides stabilise this stretch: cysteine 54-cysteine 71, cysteine 55-cysteine 73, and cysteine 61-cysteine 74.

Belongs to the conotoxin M superfamily. Three disulfide isomers have been synthesized and tested. SIIID with the disulfide pairing 1-4;2-5;3-6 is the most active. Expressed by the venom duct.

Its subcellular location is the secreted. The short synthetic peptide SIIID (range 54-74, with disulfide pairing 1-4, 2-5 and 3-6) reversibly inhibits human alpha-7/CHRNA7 acetylcholine receptor (IC(50)=880 nM). Shows a paralytic effect in fish. This chain is Conotoxin SIIID, found in Conus striatus (Striated cone).